Here is a 517-residue protein sequence, read N- to C-terminus: L-amino-acid oxidase (517 aa).

Residues 1–18 (MNVFFMFSLLFLAALESC) form the signal peptide. An intrachain disulfide couples Cys29 to Cys192. Residues 62–63 (MA), 82–83 (EA), Arg90, and 106–109 (GPMR) contribute to the FAD site. Arg109 provides a ligand contact to substrate. Asn191 carries N-linked (GlcNAc...) asparagine glycosylation. Residue Val280 coordinates FAD. The cysteines at positions 350 and 431 are disulfide-linked. N-linked (GlcNAc...) asparagine glycosylation is present at Asn380. Tyr391 contributes to the substrate binding site. FAD contacts are provided by residues Glu476 and 483–488 (GWLDST). Residue 483 to 484 (GW) participates in substrate binding.

The protein belongs to the flavin monoamine oxidase family. FIG1 subfamily. As to quaternary structure, homodimer; non-covalently linked. It depends on FAD as a cofactor. Post-translationally, N-glycosylated. As to expression, expressed by the venom gland.

The protein localises to the secreted. The enzyme catalyses an L-alpha-amino acid + O2 + H2O = a 2-oxocarboxylate + H2O2 + NH4(+). In terms of biological role, catalyzes an oxidative deamination of predominantly hydrophobic and aromatic L-amino acids, thus producing hydrogen peroxide that may contribute to the diverse toxic effects of this enzyme. Exhibits diverse biological activities, such as hemorrhage, hemolysis, edema, apoptosis of vascular endothelial cells or tumor cell lines, antibacterial and antiparasitic activities, as well as regulation of platelet aggregation. Effects of snake L-amino oxidases on platelets are controversial, since they either induce aggregation or inhibit agonist-induced aggregation. These different effects are probably due to different experimental conditions. In Notechis scutatus scutatus (Mainland tiger snake), this protein is L-amino-acid oxidase.